The chain runs to 264 residues: MALLQLERISAQYPGAAEPVLADISLTLGPQQLLVALGPSGSGKTSLLNLIAGFVEPSAGRIQLDGVPVQGPSAERGVVFQDDALLPWQDVLGNVAFGLELAGVARDKREARAREMLALVDLAGFDKRRIWQLSGGQKQRVGLARALAADPRVLLMDEPFGALDAFTREQMQELLLQVWRRTAKPVFLITHDIEEAVFLATDLILLAPNPGQIVERLNLDFGQRYAAGESARAIKSDPRFIETREHVLARVFSQRSATQQQERP.

Positions 4-233 (LQLERISAQY…RYAAGESARA (230 aa)) constitute an ABC transporter domain. Residue 38–45 (GPSGSGKT) coordinates ATP.

The protein belongs to the ABC transporter superfamily. Taurine importer (TC 3.A.1.17.1) family. In terms of assembly, the complex is composed of two ATP-binding proteins (TauB), two transmembrane proteins (TauC) and a solute-binding protein (TauA).

Its subcellular location is the cell inner membrane. It carries out the reaction taurine(out) + ATP + H2O = taurine(in) + ADP + phosphate + H(+). In terms of biological role, part of the ABC transporter complex TauABC involved in taurine import. Responsible for energy coupling to the transport system. The polypeptide is Taurine import ATP-binding protein TauB (Pseudomonas fluorescens (strain ATCC BAA-477 / NRRL B-23932 / Pf-5)).